Reading from the N-terminus, the 1273-residue chain is Restriction of telomere capping protein 1 (1273 aa).

Positions 1 to 16 (MNNRPIPRNQASSSLG) are enriched in polar residues. Disordered stretches follow at residues 1 to 20 (MNNR…RNDL) and 69 to 93 (LRES…SGLY). WD repeat units lie at residues 119–164 (AGKT…KRSK), 166–207 (TKLS…SIDN), 215–255 (QHVR…SRTL), 327–366 (AHSG…PGTD), and 448–486 (STSS…TVLD). Residues 521–559 (ANIEESKKPPNQRVSINSLSGTAGGGNSGGGSNSGMIGS) form a disordered region. Positions 542–553 (TAGGGNSGGGSN) are enriched in gly residues. The stretch at 639 to 679 (NNMRVSQLPPERKSLYSPEVQAIRESPVKVFKFLAKELEFS) is one WD 6 repeat. Positions 741-777 (KEGSESLIESDGESSAKSHESDDNSSDADKKENAKDG) are disordered. Basic and acidic residues predominate over residues 754 to 777 (SSAKSHESDDNSSDADKKENAKDG). Residues 784–824 (KIDILLELIPICGHNASVYSYIDDLPNFKIWILIRDSLLWD) form a WD 7 repeat. A compositionally biased stretch (polar residues) spans 839–848 (ETQSTDQIGQ). 2 disordered regions span residues 839–861 (ETQS…LASD) and 880–971 (ALRS…TNKR). Residues 880–890 (ALRSDSDEPKD) show a composition bias toward basic and acidic residues. Over residues 898–909 (LKSQLTKIQETE) the composition is skewed to polar residues. Over residues 941–954 (DSDSAVLEDDDNEE) the composition is skewed to acidic residues. One copy of the WD 8 repeat lies at 1058 to 1101 (STAEFFNKSPMRPLSPVAPVSSFKSNPTEFLPPWNTRRLLKQIF). The segment at 1225–1267 (CVFCERPIKTLAIGLLECGHEGHFQCLQSWFLDEGMAECPGGC) adopts an RING-type; degenerate zinc-finger fold.

It belongs to the WD repeat RTC1 family.

It is found in the vacuole. Functionally, may be involved in a process influencing telomere capping. In Zygosaccharomyces rouxii (strain ATCC 2623 / CBS 732 / NBRC 1130 / NCYC 568 / NRRL Y-229), this protein is Restriction of telomere capping protein 1 (RTC1).